A 279-amino-acid chain; its full sequence is Oxygen-dependent coproporphyrinogen-III oxidase (279 aa).

Ser-102 contributes to the substrate binding site. Positions 106 and 116 each coordinate a divalent metal cation. The active-site Proton donor is the His-116. 118–120 serves as a coordination point for substrate; sequence NTR. Residues His-149 and His-179 each coordinate a divalent metal cation. The interval 244 to 279 is important for dimerization; that stretch reads YVEFNLLYDRGTKFGLMTDGNVEAILMSLPPEVKWA.

Belongs to the aerobic coproporphyrinogen-III oxidase family. Homodimer. A divalent metal cation is required as a cofactor.

The protein localises to the cytoplasm. It carries out the reaction coproporphyrinogen III + O2 + 2 H(+) = protoporphyrinogen IX + 2 CO2 + 2 H2O. It participates in porphyrin-containing compound metabolism; protoporphyrin-IX biosynthesis; protoporphyrinogen-IX from coproporphyrinogen-III (O2 route): step 1/1. Its function is as follows. Involved in the heme biosynthesis. Catalyzes the aerobic oxidative decarboxylation of propionate groups of rings A and B of coproporphyrinogen-III to yield the vinyl groups in protoporphyrinogen-IX. This Rickettsia bellii (strain OSU 85-389) protein is Oxygen-dependent coproporphyrinogen-III oxidase.